Consider the following 376-residue polypeptide: Probable dual-specificity RNA methyltransferase RlmN (376 aa).

The disordered stretch occupies residues 1-25; it reads MSDSERTSLPLVFDEPRGRKKPPRH. Catalysis depends on Glu-113, which acts as the Proton acceptor. A Radical SAM core domain is found at 119 to 362; that stretch reads YPDRATMCVS…PTTVRDTRGR (244 aa). A disulfide bridge connects residues Cys-126 and Cys-368. Cys-133, Cys-137, and Cys-140 together coordinate [4Fe-4S] cluster. S-adenosyl-L-methionine is bound by residues 188–189, Ser-222, 245–247, and Asn-325; these read GE and SLH. Cys-368 functions as the S-methylcysteine intermediate in the catalytic mechanism.

The protein belongs to the radical SAM superfamily. RlmN family. Requires [4Fe-4S] cluster as cofactor.

The protein localises to the cytoplasm. It carries out the reaction adenosine(2503) in 23S rRNA + 2 reduced [2Fe-2S]-[ferredoxin] + 2 S-adenosyl-L-methionine = 2-methyladenosine(2503) in 23S rRNA + 5'-deoxyadenosine + L-methionine + 2 oxidized [2Fe-2S]-[ferredoxin] + S-adenosyl-L-homocysteine. The catalysed reaction is adenosine(37) in tRNA + 2 reduced [2Fe-2S]-[ferredoxin] + 2 S-adenosyl-L-methionine = 2-methyladenosine(37) in tRNA + 5'-deoxyadenosine + L-methionine + 2 oxidized [2Fe-2S]-[ferredoxin] + S-adenosyl-L-homocysteine. Its function is as follows. Specifically methylates position 2 of adenine 2503 in 23S rRNA and position 2 of adenine 37 in tRNAs. The sequence is that of Probable dual-specificity RNA methyltransferase RlmN from Nocardioides sp. (strain ATCC BAA-499 / JS614).